A 491-amino-acid polypeptide reads, in one-letter code: Probable malate:quinone oxidoreductase (491 aa).

The protein belongs to the MQO family. It depends on FAD as a cofactor.

It catalyses the reaction (S)-malate + a quinone = a quinol + oxaloacetate. It functions in the pathway carbohydrate metabolism; tricarboxylic acid cycle; oxaloacetate from (S)-malate (quinone route): step 1/1. The chain is Probable malate:quinone oxidoreductase from Leifsonia xyli subsp. xyli (strain CTCB07).